Consider the following 124-residue polypeptide: Large ribosomal subunit protein eL31 (124 aa).

It belongs to the eukaryotic ribosomal protein eL31 family.

This is Large ribosomal subunit protein eL31 (RpL31) from Spodoptera frugiperda (Fall armyworm).